Reading from the N-terminus, the 181-residue chain is Probable pyruvoyl-dependent arginine decarboxylase (181 aa).

Ser43 is subject to Pyruvic acid (Ser).

This sequence belongs to the PdaD family. Pyruvate is required as a cofactor.

It catalyses the reaction L-arginine + H(+) = agmatine + CO2. In Chlorobaculum parvum (strain DSM 263 / NCIMB 8327) (Chlorobium vibrioforme subsp. thiosulfatophilum), this protein is Probable pyruvoyl-dependent arginine decarboxylase.